The sequence spans 175 residues: Nucleoside diphosphate kinase 6 (175 aa).

Residues K15, F63, R91, T97, R111, and N121 each coordinate ATP. H124 serves as the catalytic Pros-phosphohistidine intermediate.

The protein belongs to the NDK family. Mg(2+) is required as a cofactor.

It carries out the reaction a 2'-deoxyribonucleoside 5'-diphosphate + ATP = a 2'-deoxyribonucleoside 5'-triphosphate + ADP. It catalyses the reaction a ribonucleoside 5'-diphosphate + ATP = a ribonucleoside 5'-triphosphate + ADP. Major role in the synthesis of nucleoside triphosphates other than ATP. The ATP gamma phosphate is transferred to the NDP beta phosphate via a ping-pong mechanism, using a phosphorylated active-site intermediate. This is Nucleoside diphosphate kinase 6 (nme6) from Danio rerio (Zebrafish).